Here is a 473-residue protein sequence, read N- to C-terminus: Cell division protein FtsP (473 aa).

A signal peptide (tat-type signal) is located at residues 1–27 (MSFSRRQFLQASGLAVCLGSLSSSVRA).

Belongs to the FtsP family. Post-translationally, predicted to be exported by the Tat system. The position of the signal peptide cleavage has not been experimentally proven.

Its subcellular location is the periplasm. Cell division protein that is required for growth during stress conditions. May be involved in protecting or stabilizing the divisomal assembly under conditions of stress. The sequence is that of Cell division protein FtsP from Proteus mirabilis (strain HI4320).